A 148-amino-acid chain; its full sequence is Putative cyclin-dependent kinase inhibitor SPL2 (148 aa).

Residues Ser59 and Ser86 each carry the phosphoserine modification.

It is found in the cytoplasmic granule. Its subcellular location is the cytoplasm. Putative cyclin-dependent kinase (CDK) inhibitor necessary and sufficient for PHO pathway-dependent down-regulation of low-affinity phosphate transport. The polypeptide is Putative cyclin-dependent kinase inhibitor SPL2 (SPL2) (Saccharomyces cerevisiae (strain YJM789) (Baker's yeast)).